Reading from the N-terminus, the 549-residue chain is CTP synthase (549 aa).

An amidoligase domain region spans residues 1 to 270 (MTKFVFVTGG…DRLICEELRL (270 aa)). Ser-13 lines the CTP pocket. Ser-13 lines the UTP pocket. ATP is bound by residues 14-19 (SLGKGI) and Asp-71. Mg(2+)-binding residues include Asp-71 and Glu-144. CTP is bound by residues 151–153 (DIE), 191–196 (KTKPTQ), and Lys-227. UTP-binding positions include 191 to 196 (KTKPTQ) and Lys-227. In terms of domain architecture, Glutamine amidotransferase type-1 spans 295–547 (TIGMVGKYVD…VEAALAAQRQ (253 aa)). Gly-356 provides a ligand contact to L-glutamine. The Nucleophile; for glutamine hydrolysis role is filled by Cys-383. L-glutamine contacts are provided by residues 384-387 (LGMQ), Glu-407, and Arg-473. Active-site residues include His-520 and Glu-522.

This sequence belongs to the CTP synthase family. Homotetramer.

It catalyses the reaction UTP + L-glutamine + ATP + H2O = CTP + L-glutamate + ADP + phosphate + 2 H(+). The catalysed reaction is L-glutamine + H2O = L-glutamate + NH4(+). It carries out the reaction UTP + NH4(+) + ATP = CTP + ADP + phosphate + 2 H(+). The protein operates within pyrimidine metabolism; CTP biosynthesis via de novo pathway; CTP from UDP: step 2/2. Allosterically activated by GTP, when glutamine is the substrate; GTP has no effect on the reaction when ammonia is the substrate. The allosteric effector GTP functions by stabilizing the protein conformation that binds the tetrahedral intermediate(s) formed during glutamine hydrolysis. Inhibited by the product CTP, via allosteric rather than competitive inhibition. Catalyzes the ATP-dependent amination of UTP to CTP with either L-glutamine or ammonia as the source of nitrogen. Regulates intracellular CTP levels through interactions with the four ribonucleotide triphosphates. This is CTP synthase from Cupriavidus metallidurans (strain ATCC 43123 / DSM 2839 / NBRC 102507 / CH34) (Ralstonia metallidurans).